We begin with the raw amino-acid sequence, 557 residues long: MTSAAPAKKPYRKAPPEHRELRLEIPGSRLEQEEPLTDAERMKLLQEENEELRRRLASATRRTEALERELEIGQDCLELELGQSREELDKFKDKFRRLQNSYTASQRTNQELEDKLHTLASLSHSWIFAIKKAEMDRKTLDWEIVELTNKLLDAKNTINKLEELNERYRLDCNLAVQLLKCNKSHFRNHKFADLPCELQDMVRKHLHSGQEAASPGPAPSLAPGAVVPTSVIARVLEKPESLLLNSAQSGSAGRPLAEDVFVHVDMSEGVPGDPASPPAPGSPTPQPNGECHSLGTARGSPEEELPLPAFEKLNPYPTPSPPHPLYPGRRVIEFSEDKVRIPRNSPLPNCTYATRQAISLSLVEEGSERARPSPVPSTPASAQASPHHQPSPAPLTLSAPASSASSEEDLLVSWQRAFVDRTPPPAAVAQRTAFGRDALPELQRHFAHSPADRDEVVQAPSARPEESELLLPTEPDSGFPREEEELNLPISPEEERQSLLPINRGTEEGPGTSHTEGRAWPLPSSSRPQRSPKRMGVHHLHRKDSLTQAQEQGNLLN.

Residues 1 to 37 form a disordered region; that stretch reads MTSAAPAKKPYRKAPPEHRELRLEIPGSRLEQEEPLT. At Thr-2 the chain carries N-acetylthreonine. The span at 14-23 shows a compositional bias: basic and acidic residues; it reads APPEHRELRL. A coiled-coil region spans residues 42–171; the sequence is MKLLQEENEE…EELNERYRLD (130 aa). 2 disordered regions span residues 266 to 303 and 309 to 328; these read MSEG…SPEE and AFEK…LYPG. The segment covering 274-286 has biased composition (pro residues); that stretch reads PASPPAPGSPTPQ. The residue at position 300 (Ser-300) is a Phosphoserine. Over residues 316–325 the composition is skewed to pro residues; that stretch reads YPTPSPPHPL. Position 318 is a phosphothreonine (Thr-318). Ser-320 and Ser-345 each carry phosphoserine. Positions 364–409 are disordered; sequence EEGSERARPSPVPSTPASAQASPHHQPSPAPLTLSAPASSASSEED. The span at 378 to 388 shows a compositional bias: polar residues; that stretch reads TPASAQASPHH. Over residues 394 to 405 the composition is skewed to low complexity; it reads PLTLSAPASSAS. At Thr-422 the chain carries Phosphothreonine. Residues 439–456 show a composition bias toward basic and acidic residues; the sequence is LPELQRHFAHSPADRDEV. The segment at 439–557 is disordered; it reads LPELQRHFAH…QAQEQGNLLN (119 aa). The residue at position 491 (Ser-491) is a Phosphoserine. Basic residues predominate over residues 530 to 542; the sequence is RSPKRMGVHHLHR. Ser-545 carries the phosphoserine modification. Over residues 546–557 the composition is skewed to polar residues; that stretch reads LTQAQEQGNLLN.

In terms of assembly, interacts with DLG1. Interacts with ARF6 (GTP-bound form). Ubiquitously expressed.

The protein resides in the golgi apparatus. Its subcellular location is the trans-Golgi network. The protein localises to the cell junction. It localises to the tight junction. It is found in the cell membrane. Plays a role in regulating the structure of the Golgi apparatus. The polypeptide is Tight junction-associated protein 1 (Homo sapiens (Human)).